Reading from the N-terminus, the 92-residue chain is Acylphosphatase (92 aa).

Residues 7-92 (KTRCTISGRV…DPAPAEFSVG (86 aa)) form the Acylphosphatase-like domain. Catalysis depends on residues Arg-22 and Asn-40.

The protein belongs to the acylphosphatase family.

The catalysed reaction is an acyl phosphate + H2O = a carboxylate + phosphate + H(+). This is Acylphosphatase (acyP) from Halorhodospira halophila (strain DSM 244 / SL1) (Ectothiorhodospira halophila (strain DSM 244 / SL1)).